The chain runs to 107 residues: MRQCTPSLPLCSWTSQKSISLTVLDSIIQISPLVLSNRRLDYKTSVSANLARTSPGLLTTSVLESTFQQEITSFHQEFKNQTTNSACSVKTGAKTSTCIYLYTHNSM.

This is an uncharacterized protein from Saccharomyces cerevisiae (strain ATCC 204508 / S288c) (Baker's yeast).